A 274-amino-acid polypeptide reads, in one-letter code: Diaminopimelate epimerase (274 aa).

Asn-11, Gln-44, and Asn-64 together coordinate substrate. Catalysis depends on Cys-73, which acts as the Proton donor. Substrate is bound by residues 74-75 (GN), Asn-157, Asn-190, and 208-209 (ER). The Proton acceptor role is filled by Cys-217. 218-219 (GT) serves as a coordination point for substrate.

This sequence belongs to the diaminopimelate epimerase family. Homodimer.

Its subcellular location is the cytoplasm. It carries out the reaction (2S,6S)-2,6-diaminopimelate = meso-2,6-diaminopimelate. It participates in amino-acid biosynthesis; L-lysine biosynthesis via DAP pathway; DL-2,6-diaminopimelate from LL-2,6-diaminopimelate: step 1/1. Functionally, catalyzes the stereoinversion of LL-2,6-diaminopimelate (L,L-DAP) to meso-diaminopimelate (meso-DAP), a precursor of L-lysine and an essential component of the bacterial peptidoglycan. This chain is Diaminopimelate epimerase, found in Blochmanniella pennsylvanica (strain BPEN).